The following is a 348-amino-acid chain: Protein RecA (348 aa).

64–71 contacts ATP; sequence GPESSGKT. Positions 325-335 are enriched in basic and acidic residues; the sequence is YEIDGASKEPL. Positions 325–348 are disordered; that stretch reads YEIDGASKEPLEETEETLSLLDDE. The span at 336–348 shows a compositional bias: acidic residues; sequence EETEETLSLLDDE.

Belongs to the RecA family.

It localises to the cytoplasm. Its function is as follows. Can catalyze the hydrolysis of ATP in the presence of single-stranded DNA, the ATP-dependent uptake of single-stranded DNA by duplex DNA, and the ATP-dependent hybridization of homologous single-stranded DNAs. It interacts with LexA causing its activation and leading to its autocatalytic cleavage. This Listeria seeligeri protein is Protein RecA.